We begin with the raw amino-acid sequence, 137 residues long: Putative pre-16S rRNA nuclease (137 aa).

The protein belongs to the YqgF nuclease family.

It is found in the cytoplasm. Its function is as follows. Could be a nuclease involved in processing of the 5'-end of pre-16S rRNA. This Chromobacterium violaceum (strain ATCC 12472 / DSM 30191 / JCM 1249 / CCUG 213 / NBRC 12614 / NCIMB 9131 / NCTC 9757 / MK) protein is Putative pre-16S rRNA nuclease.